Here is a 97-residue protein sequence, read N- to C-terminus: Small integral membrane protein 8 (97 aa).

A disordered region spans residues 1 to 24; it reads MSSAPEPPTFKKEPPKEKDFQSPG. The segment covering 9 to 20 has biased composition (basic and acidic residues); that stretch reads TFKKEPPKEKDF. The chain crosses the membrane as a helical span at residues 48–67; sequence PVMAFGLVTLSLCVAYIGYL.

Belongs to the SMIM8 family.

The protein localises to the membrane. The polypeptide is Small integral membrane protein 8 (SMIM8) (Pongo abelii (Sumatran orangutan)).